A 725-amino-acid chain; its full sequence is Glutamine-dependent NAD(+) synthetase (725 aa).

Residues 4 to 274 form the CN hydrolase domain; that stretch reads LKVATCNLNQ…VEVIISQVDL (271 aa). Catalysis depends on glutamate 44, which acts as the Proton acceptor; for glutaminase activity. The For glutaminase activity role is filled by lysine 113. Cysteine 174 (nucleophile; for glutaminase activity) is an active-site residue. The ligase stretch occupies residues 324–709; it reads YHSPQEEIAF…FPEEEANSNK (386 aa). 354 to 361 is an ATP binding site; it reads PLSGGADS. The active site involves serine 356.

In the C-terminal section; belongs to the NAD synthetase family.

The enzyme catalyses deamido-NAD(+) + L-glutamine + ATP + H2O = L-glutamate + AMP + diphosphate + NAD(+) + H(+). It functions in the pathway cofactor biosynthesis; NAD(+) biosynthesis; NAD(+) from deamido-NAD(+) (L-Gln route): step 1/1. This Arabidopsis thaliana (Mouse-ear cress) protein is Glutamine-dependent NAD(+) synthetase.